A 400-amino-acid polypeptide reads, in one-letter code: Opsin-3 (400 aa).

The Extracellular portion of the chain corresponds to 1-38; that stretch reads MYSGNRSGDQGYWEDGAGAEGAAPAGTRSPAPLFSPTA. Asn-5 is a glycosylation site (N-linked (GlcNAc...) asparagine). A helical transmembrane segment spans residues 39 to 63; the sequence is YERLALLLGCLALLGVGGNLLVLLL. Over 64-75 the chain is Cytoplasmic; it reads YSKFPRLRTPTH. The helical transmembrane segment at 76-100 threads the bilayer; sequence LFLVNLSLGDLLVSLFGVTFTFASC. Over 101–115 the chain is Extracellular; it reads LRNGWVWDAVGCAWD. A disulfide bond links Cys-112 and Cys-186. The helical transmembrane segment at 116 to 135 threads the bilayer; it reads GFSGSLFGFVSITTLTVLAY. Topologically, residues 136–151 are cytoplasmic; sequence ERYIRVVHARVINFSW. Residues 152 to 175 form a helical membrane-spanning segment; the sequence is AWRAITYIWLYSLAWAGAPLLGWN. Residues 176–199 are Extracellular-facing; it reads RYILDIHGLGCTVDWRSKDANDSS. A glycan (N-linked (GlcNAc...) asparagine) is linked at Asn-196. A helical membrane pass occupies residues 200–227; that stretch reads FVLFLFLGCLVVPVGIIAHCYGHILYSV. Residues 228–253 are Cytoplasmic-facing; the sequence is RMLRCVEDLQTIQVIKMLRYEKKVAK. The helical transmembrane segment at 254–277 threads the bilayer; that stretch reads MCFLMAFVFLTCWMPYIVTRFLVV. Over 278–285 the chain is Extracellular; the sequence is NGYGHLVT. A helical membrane pass occupies residues 286 to 310; it reads PTVSIVSYLFAKSSTVYNPVIYIFM. Lys-297 bears the N6-(retinylidene)lysine mark. At 311 to 400 the chain is on the cytoplasmic side; it reads NRKFRRSLLQ…KVDVIQVRPL (90 aa). A lipid anchor (S-palmitoyl cysteine) is attached at Cys-323.

Belongs to the G-protein coupled receptor 1 family. Opsin subfamily. As to quaternary structure, interacts with MC1R; the interaction results in a decrease in MC1R-mediated cAMP signaling and ultimately a decrease in melanin production in melanocytes. In terms of tissue distribution, expressed in the eye (at protein level). Expressed in tracheal airway smooth muscle. Expressed in brown adipocyte tissue; expression becomes more abundant during differentiation. Strongly expressed in brain. Highly expressed in the preoptic area and paraventricular nucleus of the hypothalamus. Shows highly patterned expression in other regions of the brain, being enriched in selected regions of the cerebral cortex, cerebellar Purkinje cells, a subset of striatal neurons, selected thalamic nuclei, and a subset of interneurons in the ventral horn of the spinal cord.

The protein localises to the cell membrane. The protein resides in the cytoplasm. In terms of biological role, G-protein coupled receptor which selectively activates G proteins via ultraviolet A (UVA) light-mediated activation in the skin. Binds both 11-cis retinal and all-trans retinal. Regulates melanogenesis in melanocytes via inhibition of alpha-MSH-induced MC1R-mediated cAMP signaling, modulation of calcium flux, regulation of CAMK2 phosphorylation, and subsequently phosphorylation of CREB, p38, ERK and MITF in response to blue light. Plays a role in melanocyte survival through regulation of intracellular calcium levels and subsequent BCL2/RAF1 signaling. Additionally regulates apoptosis via cytochrome c release and subsequent activation of the caspase cascade. Required for TYR and DCT blue light-induced complex formation in melanocytes. Involved in keratinocyte differentiation in response to blue-light. Required for the UVA-mediated induction of calcium and mitogen-activated protein kinase signaling resulting in the expression of MMP1, MMP2, MMP3, MMP9 and TIMP1 in dermal fibroblasts. Plays a role in light-mediated glucose uptake, mitochondrial respiration and fatty acid metabolism in brown adipocyte tissues. May be involved in photorelaxation of airway smooth muscle cells, via blue-light dependent GPCR signaling pathways. This chain is Opsin-3 (Opn3), found in Mus musculus (Mouse).